The primary structure comprises 426 residues: GTPase HflX (426 aa).

The Hflx-type G domain occupies 198 to 365 (PTVSLVGYTN…ALTERLSGEV (168 aa)). GTP is bound by residues 204–211 (GYTNAGKS), 229–233 (FATLD), 251–254 (DTVG), 317–320 (NKID), and 343–345 (SAQ). Positions 211 and 231 each coordinate Mg(2+).

Belongs to the TRAFAC class OBG-HflX-like GTPase superfamily. HflX GTPase family. In terms of assembly, monomer. Associates with the 50S ribosomal subunit. This interaction occurs in the presence of GTP, GDP, ATP or ADP, but not in their absence. Requires Mg(2+) as cofactor.

It localises to the cytoplasm. Intrinsic GTPase activity is very slow and can be stimulated by the presence of 50S ribosomal subunits or 70S ribosomes. GTPase activity is inhibited by ATP. GTPase that associates with the 50S ribosomal subunit and may have a role during protein synthesis or ribosome biogenesis. In vitro, also exhibits ATPase activity. This is GTPase HflX from Escherichia coli (strain K12).